Consider the following 437-residue polypeptide: Adenylosuccinate synthetase (437 aa).

Residues 12-18 (GDEGKGK) and 40-42 (GHT) each bind GTP. The Proton acceptor role is filled by D13. Mg(2+)-binding residues include D13 and G40. Residues 13–16 (DEGK), 38–41 (NAGH), T128, R142, Q223, T238, and R302 contribute to the IMP site. H41 acts as the Proton donor in catalysis. 298–304 (TTTGRKR) contacts substrate. GTP-binding positions include R304, 330–332 (KLD), and 412–414 (SLG).

It belongs to the adenylosuccinate synthetase family. Homodimer. The cofactor is Mg(2+).

The protein resides in the cytoplasm. It catalyses the reaction IMP + L-aspartate + GTP = N(6)-(1,2-dicarboxyethyl)-AMP + GDP + phosphate + 2 H(+). The protein operates within purine metabolism; AMP biosynthesis via de novo pathway; AMP from IMP: step 1/2. In terms of biological role, plays an important role in the de novo pathway of purine nucleotide biosynthesis. Catalyzes the first committed step in the biosynthesis of AMP from IMP. The sequence is that of Adenylosuccinate synthetase from Trichodesmium erythraeum (strain IMS101).